Here is a 366-residue protein sequence, read N- to C-terminus: MTPEHLPTEQYDAQLAEKVVRLQSMMAPFSDLVPEVFRSPASHYRMRAEFRLWHDGDDLYHIIFEQQTKSRIRVDSFPAASELINQLMTAMIEGVRHNRVLRHKLFQIDYLTTMSNQAVVSLLYHKKLDDEWRQEAETLRDALRAQNLNVHLIGRATKTKIELDQDYIDERLPVAGKEMIYRQVENSFTQPNAAMNIQMLEWALDATKASKGDLLELYCGNGNFSLALARNFDRVLATEIAKPSVAAAQYNIAANHIDNVQIIRMAAEEFTQAMNGVREFNRLQGIDLKSYQCETIFVDPPRSGLDSETEKMVQAYPRILYISCNPETLCKNLETLSQTHNVSRLALFDQFPYTHHMECGVLLTAR.

S-adenosyl-L-methionine is bound by residues Q190, Y218, N223, E239, and D299. C324 functions as the Nucleophile in the catalytic mechanism. E358 functions as the Proton acceptor in the catalytic mechanism.

It belongs to the class I-like SAM-binding methyltransferase superfamily. RNA M5U methyltransferase family. TrmA subfamily.

It catalyses the reaction uridine(54) in tRNA + S-adenosyl-L-methionine = 5-methyluridine(54) in tRNA + S-adenosyl-L-homocysteine + H(+). The catalysed reaction is uridine(341) in tmRNA + S-adenosyl-L-methionine = 5-methyluridine(341) in tmRNA + S-adenosyl-L-homocysteine + H(+). Dual-specificity methyltransferase that catalyzes the formation of 5-methyluridine at position 54 (m5U54) in all tRNAs, and that of position 341 (m5U341) in tmRNA (transfer-mRNA). This is tRNA/tmRNA (uracil-C(5))-methyltransferase from Citrobacter koseri (strain ATCC BAA-895 / CDC 4225-83 / SGSC4696).